We begin with the raw amino-acid sequence, 218 residues long: MIP18 family protein galla-1 (218 aa).

The tract at residues 1 to 59 (MLSYIKRKLSESDSGVSSVATVTSSCGGDSGRAGGTGSSESGTGSSSASISGRSQNADE) is disordered. Residues 12 to 27 (SDSGVSSVATVTSSCG) show a composition bias toward low complexity. Serine 14 carries the post-translational modification Phosphoserine. Residues 28–37 (GDSGRAGGTG) show a composition bias toward gly residues. The span at 38–54 (SSESGTGSSSASISGRS) shows a compositional bias: low complexity. Serine 65 carries the post-translational modification Phosphoserine.

The protein belongs to the MIP18 family. As to quaternary structure, component of the CGX complex composed of crb, galla (galla-1 or galla-2) and Xpd. Interacts with crb (via intracellular domain). Is not able to interact with Xpd in the absence of crb.

Its subcellular location is the apical cell membrane. The protein localises to the cytoplasm. The protein resides in the cytoskeleton. It is found in the spindle. In terms of biological role, component of the crb-galla-Xpd (CGX) complex which is essential for proper mitotic chromosome segregation in early embryos. The CGX complex is also required for cell proliferation in developing wing disks. In the CGX complex, acts with crb to recruit Xpd thus forming the functional complex. This Drosophila melanogaster (Fruit fly) protein is MIP18 family protein galla-1.